The sequence spans 520 residues: MTQTAHPDTVLIVDFGSQVTQLIARRVREAGVYCEIVPFQSAEEGFKRLKPKAVILSGSPASTLDIGSPRAPSVIFESGLPVFGICYGQQTMCAQLGGKVESGHHREFGRAFLEVEKDCALFDGLWSLGSRHQVWMSHGDRVTALPEGFEVVATSSNAPFAFIADETRKYYAVQFHPEVVHTPDGAKLISNFVHKIAGIKGDWTMSAYRAKAVEAIRKQVGGKKVICALSGGVDSSVAALLIHEAVGDQLTCILVDHGLMRKDEAANVVAMFQEHYNLHLLHIDASDRFIGELEGVSDPETKRKIIGRLFIEVFEEEAKKLGGADFLAQGTLYPDVIESVSFTGGPSVTIKSHHNVGGLPERMNMQLVEPLRELFKDEVRVLGRELGLPESFIGRHPFPGPGLAIRCPGGISREKLEILREADAIYLDEIRKAGLYDAIWQAFAVLLPVQTVGVMGDGRTYEFVCALRAVTSVDGMTADFYHYDMEFLGRAATRIINEVRGINRVVYDVTSKPPGTIEWE.

A Glutamine amidotransferase type-1 domain is found at 9 to 202; it reads TVLIVDFGSQ…VHKIAGIKGD (194 aa). Cys86 functions as the Nucleophile in the catalytic mechanism. Active-site residues include His176 and Glu178. The region spanning 203-395 is the GMPS ATP-PPase domain; it reads WTMSAYRAKA…LGLPESFIGR (193 aa). 230 to 236 contacts ATP; that stretch reads SGGVDSS.

As to quaternary structure, homodimer.

The enzyme catalyses XMP + L-glutamine + ATP + H2O = GMP + L-glutamate + AMP + diphosphate + 2 H(+). It participates in purine metabolism; GMP biosynthesis; GMP from XMP (L-Gln route): step 1/1. In terms of biological role, catalyzes the synthesis of GMP from XMP. This chain is GMP synthase [glutamine-hydrolyzing], found in Sinorhizobium fredii (strain NBRC 101917 / NGR234).